The chain runs to 332 residues: Fructose-1,6-bisphosphatase class 1 (332 aa).

Positions 89, 110, 112, and 113 each coordinate Mg(2+). Substrate contacts are provided by residues 113–116 (DGSS), Asn206, Tyr239, 257–259 (YLY), and Lys269. A Mg(2+)-binding site is contributed by Glu275.

The protein belongs to the FBPase class 1 family. In terms of assembly, homotetramer. It depends on Mg(2+) as a cofactor.

The protein resides in the cytoplasm. It catalyses the reaction beta-D-fructose 1,6-bisphosphate + H2O = beta-D-fructose 6-phosphate + phosphate. It participates in carbohydrate biosynthesis; gluconeogenesis. The chain is Fructose-1,6-bisphosphatase class 1 from Salmonella typhimurium (strain LT2 / SGSC1412 / ATCC 700720).